We begin with the raw amino-acid sequence, 778 residues long: Kin of IRRE-like protein 3 (778 aa).

An N-terminal signal peptide occupies residues 1–21 (MKPFQLDLLFVCFFLFSQELG). Topologically, residues 22-535 (LQKRGCCLVL…GLEAESVPMA (514 aa)) are extracellular. 5 Ig-like C2-type domains span residues 48–142 (YSFS…ARLT), 147–243 (PDDP…TSVT), 249–330 (PPLV…RTVD), 335–415 (PRMT…VTLT), and 419–515 (PPII…IRLK). The cysteines at positions 69 and 127 are disulfide-linked. N167 carries an N-linked (GlcNAc...) asparagine glycan. A disulfide bridge links C170 with C227. N-linked (GlcNAc...) asparagine glycosylation is present at N253. A disulfide bond links C271 and C314. N-linked (GlcNAc...) asparagine glycosylation is present at N324. 2 cysteine pairs are disulfide-bonded: C356–C398 and C440–C499. N-linked (GlcNAc...) asparagine glycosylation is present at N498. The helical transmembrane segment at 536-556 (VIIGVAVGAGVAFLVLMATIV) threads the bilayer. At 557-778 (AFCCARSQRN…PLQRRMQTHV (222 aa)) the chain is on the cytoplasmic side. Residues 727 to 736 (CDSSVSSSGK) show a composition bias toward polar residues. Residues 727–778 (CDSSVSSSGKQDGYVQFDKASKASASSSHHSQSSSQNSDPSRPLQRRMQTHV) are disordered. Over residues 748–762 (KASASSSHHSQSSSQ) the composition is skewed to low complexity.

It belongs to the immunoglobulin superfamily. As to quaternary structure, homodimer; mediates homophilic interactions to promote cell adhesion. Interacts with NPHS1; forms heterodimers with NPHS1. Interacts with NPHS2/podocin (via the C-terminus). Interacts with CASK. Interacts (via extracellular region) with MAP1B. Interacts (via extracellular region) with MYO16. Interacts (via intracellular region) with ATP1B1. Interacts (via intracellular region) with SHMT2. Interacts (via intracellular region) with UFC1. Post-translationally, undergoes proteolysis by a metalloprotease and gives rise to a soluble form. Expressed in fetal and adult brain. Also expressed in kidney, specifically in podocytes of kidney glomeruli. Also expressed in skeletal muscle.

The protein localises to the cell membrane. It localises to the secreted. In terms of biological role, synaptic adhesion molecule required for the formation of target-specific synapses. Required for formation of target-specific synapses at hippocampal mossy fiber synapses. Required for formation of mossy fiber filopodia, the synaptic structures connecting dentate granule and GABA neurons. Probably acts as a homophilic adhesion molecule that promotes trans-cellular interactions and stabilize mossy fiber filipodia contact and subsequent synapse formation. Required for the coalescence of vomeronasal sensory neuron axons. May be involved in the hematopoietic supportive capacity of stroma cells; the secreted extracellular domain is directly responsible for supporting hematopoietic stem cells. The sequence is that of Kin of IRRE-like protein 3 from Homo sapiens (Human).